The following is a 412-amino-acid chain: Aspartate kinase Ask_LysC (412 aa).

An ACT domain is found at leucine 265–arginine 332.

This sequence belongs to the aspartokinase family.

It is found in the cytoplasm. The enzyme catalyses L-aspartate + ATP = 4-phospho-L-aspartate + ADP. It functions in the pathway amino-acid biosynthesis; L-lysine biosynthesis via DAP pathway; (S)-tetrahydrodipicolinate from L-aspartate: step 1/4. Its pathway is amino-acid biosynthesis; L-methionine biosynthesis via de novo pathway; L-homoserine from L-aspartate: step 1/3. It participates in amino-acid biosynthesis; L-threonine biosynthesis; L-threonine from L-aspartate: step 1/5. With respect to regulation, allosterically and strongly feedback inhibited by tryptophan. Addition of lysine alone slightly enhances activity. The simultaneous addition of lysine and tryptophan leads to very strong feedback inhibition of the enzyme. The feedback control by tryptophan is reduced in the presence of the compatible solutes hydroxyectoine or ectoine. Its function is as follows. Involved in the biosynthesis of L-aspartate-beta-semialdehyde which is a central intermediate in the biosynthesis of different amino acids (L-lysine, L-methionine, L-threonine). Catalyzes the phosphorylation of the beta-carboxyl group of L-aspartate to yield 4-phospho-L-aspartate. The polypeptide is Aspartate kinase Ask_LysC (lysC) (Stutzerimonas stutzeri (strain A1501) (Pseudomonas stutzeri)).